A 318-amino-acid chain; its full sequence is MKHAENEYLNLCRHVMEHGTKKEDRTGTGTVSVFGYQMRFDLSKGFPLLTTKRVPFRLVASELLWFMKGDTNIRYLLQHNNNIWNEWAFKSWVESDEYTGPDMTDFGLRSQQDEEFKVQYDEQMELFKKNVLEDDEFSNKYGYLGDVYGKQWRAWKTTAGETLDQLKDVIEMIKKTPDSRRLIVSAWNPEDVPSMALPPCHTLFQFYVADGKLSCQLYQRSGDIFLGIPFNIASYSLLTHLIAHECGLEVGEFVHTIGDAHIYTNHFEQVEKQLAREPRPFPKLTLNPDVKSVFDFEMEDLTIEGYDPHPAIKAPVAV.

DUMP is bound by residues arginine 25 and 180–181; that span reads RR. The Nucleophile role is filled by cysteine 200. DUMP-binding positions include 220–223, asparagine 231, and 261–263; these read RSGD and HIY. Aspartate 223 contacts (6R)-5,10-methylene-5,6,7,8-tetrahydrofolate. Residue alanine 317 participates in (6R)-5,10-methylene-5,6,7,8-tetrahydrofolate binding.

The protein belongs to the thymidylate synthase family. Bacterial-type ThyA subfamily. Homodimer.

It is found in the cytoplasm. It catalyses the reaction dUMP + (6R)-5,10-methylene-5,6,7,8-tetrahydrofolate = 7,8-dihydrofolate + dTMP. It functions in the pathway pyrimidine metabolism; dTTP biosynthesis. Catalyzes the reductive methylation of 2'-deoxyuridine-5'-monophosphate (dUMP) to 2'-deoxythymidine-5'-monophosphate (dTMP) while utilizing 5,10-methylenetetrahydrofolate (mTHF) as the methyl donor and reductant in the reaction, yielding dihydrofolate (DHF) as a by-product. This enzymatic reaction provides an intracellular de novo source of dTMP, an essential precursor for DNA biosynthesis. This is Thymidylate synthase from Bacillus cereus (strain ATCC 14579 / DSM 31 / CCUG 7414 / JCM 2152 / NBRC 15305 / NCIMB 9373 / NCTC 2599 / NRRL B-3711).